A 640-amino-acid chain; its full sequence is Threonine--tRNA ligase (640 aa).

The TGS domain maps to 1-61 (MPTITLPDGS…ENDASLQIIT (61 aa)). The interval 242–533 (DHRKIGKRLG…LIEHYEGAFP (292 aa)) is catalytic. Zn(2+) is bound by residues Cys-333, His-384, and His-510.

This sequence belongs to the class-II aminoacyl-tRNA synthetase family. As to quaternary structure, homodimer. Zn(2+) serves as cofactor.

It localises to the cytoplasm. It carries out the reaction tRNA(Thr) + L-threonine + ATP = L-threonyl-tRNA(Thr) + AMP + diphosphate + H(+). Its function is as follows. Catalyzes the attachment of threonine to tRNA(Thr) in a two-step reaction: L-threonine is first activated by ATP to form Thr-AMP and then transferred to the acceptor end of tRNA(Thr). Also edits incorrectly charged L-seryl-tRNA(Thr). This is Threonine--tRNA ligase from Pseudomonas syringae pv. tomato (strain ATCC BAA-871 / DC3000).